Consider the following 69-residue polypeptide: Large ribosomal subunit protein eL38z/eL38y (69 aa).

It belongs to the eukaryotic ribosomal protein eL38 family.

The sequence is that of Large ribosomal subunit protein eL38z/eL38y (RPL38A) from Arabidopsis thaliana (Mouse-ear cress).